Consider the following 394-residue polypeptide: Probable sugar efflux transporter (394 aa).

12 helical membrane passes run 15–35, 50–70, 79–99, 109–129, 137–157, 168–188, 209–229, 249–269, 272–292, 299–319, 333–353, and 362–382; these read VLML…PVGL, VGLM…PMML, MLLM…SVAW, IGIA…AIRV, QALS…LPIG, ITFA…LKLL, PALV…YTAY, FLLL…SIYG, FPAT…MCLY, LAVS…GLAV, VAMS…ALLG, and MASV…WCAW.

Belongs to the major facilitator superfamily. SotB (TC 2.A.1.2) family.

The protein resides in the cell inner membrane. Its function is as follows. Involved in the efflux of sugars. The physiological role may be the reduction of the intracellular concentration of toxic sugars or sugar metabolites. This is Probable sugar efflux transporter from Erwinia tasmaniensis (strain DSM 17950 / CFBP 7177 / CIP 109463 / NCPPB 4357 / Et1/99).